The chain runs to 280 residues: Succinate dehydrogenase [ubiquinone] iron-sulfur subunit, mitochondrial (280 aa).

Residues 1–28 constitute a mitochondrion transit peptide; sequence MAAVVAVSLKRWFPATTLGGACLQACRG. Positions 40 to 131 constitute a 2Fe-2S ferredoxin-type domain; the sequence is KKFAIYRWDP…DKVSKIYPLP (92 aa). N6-acetyllysine occurs at positions 51 and 55. The [2Fe-2S] cluster site is built by Cys-93, Cys-98, Cys-101, and Cys-113. An interaction with SDHAF1 region spans residues 146-218; it reads FYAQYKSIEP…PAVLMQAYRW (73 aa). In terms of domain architecture, 4Fe-4S ferredoxin-type spans 176–206; sequence EREKLDGLYECILCACCSTSCPSYWWNGDKY. Cys-186, Cys-189, and Cys-192 together coordinate [4Fe-4S] cluster. Position 196 (Cys-196) interacts with [3Fe-4S] cluster. Residue Trp-201 participates in a ubiquinone binding. Residues Cys-243 and Cys-249 each coordinate [3Fe-4S] cluster. Cys-253 serves as a coordination point for [4Fe-4S] cluster.

Belongs to the succinate dehydrogenase/fumarate reductase iron-sulfur protein family. Component of complex II composed of four subunits: the flavoprotein (FP) SDHA, iron-sulfur protein (IP) SDHB, and a cytochrome b560 composed of SDHC and SDHD. Interacts with SDHAF1; the interaction is required for iron-sulfur cluster incorporation into SDHB. It depends on [2Fe-2S] cluster as a cofactor. Requires [3Fe-4S] cluster as cofactor. The cofactor is [4Fe-4S] cluster.

It is found in the mitochondrion inner membrane. The enzyme catalyses a quinone + succinate = fumarate + a quinol. It carries out the reaction (R)-malate + a quinone = enol-oxaloacetate + a quinol. It catalyses the reaction (S)-malate + a quinone = enol-oxaloacetate + a quinol. The protein operates within carbohydrate metabolism; tricarboxylic acid cycle; fumarate from succinate (eukaryal route): step 1/1. Its activity is regulated as follows. Enol-oxaloacetate inhibits the succinate dehydrogenase activity. Its function is as follows. Iron-sulfur protein (IP) subunit of the succinate dehydrogenase complex (mitochondrial respiratory chain complex II), responsible for transferring electrons from succinate to ubiquinone (coenzyme Q). SDH also oxidizes malate to the non-canonical enol form of oxaloacetate, enol-oxaloacetate. Enol-oxaloacetate, which is a potent inhibitor of the succinate dehydrogenase activity, is further isomerized into keto-oxaloacetate. This is Succinate dehydrogenase [ubiquinone] iron-sulfur subunit, mitochondrial (SDHB) from Sus scrofa (Pig).